The primary structure comprises 326 residues: UDP-N-acetylglucosamine transporter (326 aa).

Helical transmembrane passes span 4-24 (NLKYLSLGILVFQTTSLVLTM), 38-58 (LSSTAVVVAEFLKIMACIFLV), 136-156 (LGMYQWLSLVILMAGVAFVQW), 174-194 (FVGLMAVLIACFSSGFAGVYF), 212-232 (LGFFGSIFGLMGVYVYDGELV), 243-263 (QLTWIVVVLQALGGLVIAAVI), 269-289 (ILKGFATSLSIILSTIISYFW), and 293-313 (FVPTSVFFLGAILVIAATFLY).

Belongs to the nucleotide-sugar transporter family. SLC35A subfamily. In terms of assembly, interacts with SLC35A2; the interaction is reduced in the presence of SLC35A4. Found in a complex with SLC35A2 and SLC35A4. Interacts with MGAT4B. Post-translationally, O-Glcnacylation regulates the stability of SLC35A3 and the specific complex formation with MGAT4B.

The protein resides in the golgi apparatus membrane. The catalysed reaction is UMP(out) + UDP-N-acetyl-alpha-D-glucosamine(in) = UMP(in) + UDP-N-acetyl-alpha-D-glucosamine(out). In terms of biological role, transports diphosphate-N-acetylglucosamine (UDP-GlcNAc) from the cytosol into the lumen of the Golgi apparatus, functioning as an antiporter that exchanges UDP-N-acetyl-alpha-D-glucosamine for UMP. May supply UDP-GlcNAc as substrate for Golgi-resident glycosyltransferases that generate highly branched, multiantennary complex N-glycans and keratan sulfate. However, the exact role of SLC35A3 still needs to be elucidated, it could be a member of a catalytically more efficient multiprotein complex rather than function independently as a single transporter. The polypeptide is UDP-N-acetylglucosamine transporter (Slc35a3) (Rattus norvegicus (Rat)).